Consider the following 767-residue polypeptide: Syn-copalyl diphosphate synthase (767 aa).

Residues 45–74 form a disordered region; it reads GPMLISKSPPYPASEETREWEAEGQHEHTD. Positions 59–74 are enriched in basic and acidic residues; sequence EETREWEAEGQHEHTD. K233 contributes to the substrate binding site. Positions 365 and 367 each coordinate Mg(2+). Residues 365 to 368 carry the DXDD motif motif; that stretch reads DIDD. Substrate is bound at residue K453.

It depends on Mg(2+) as a cofactor.

The enzyme catalyses (2E,6E,10E)-geranylgeranyl diphosphate = 9alpha-copalyl diphosphate. Its function is as follows. Catalyzes the conversion of geranylgeranyl diphosphate to the phytoalexin precursor syn-copalyl diphosphate. This Oryza sativa subsp. indica (Rice) protein is Syn-copalyl diphosphate synthase (CPS4).